Consider the following 118-residue polypeptide: Small ribosomal subunit protein uS13 (118 aa).

Residues 94 to 118 form a disordered region; that stretch reads SLPLRGQRTKTNARTRKGPRKPIRK.

Belongs to the universal ribosomal protein uS13 family. In terms of assembly, part of the 30S ribosomal subunit. Forms a loose heterodimer with protein S19. Forms two bridges to the 50S subunit in the 70S ribosome.

In terms of biological role, located at the top of the head of the 30S subunit, it contacts several helices of the 16S rRNA. In the 70S ribosome it contacts the 23S rRNA (bridge B1a) and protein L5 of the 50S subunit (bridge B1b), connecting the 2 subunits; these bridges are implicated in subunit movement. Contacts the tRNAs in the A and P-sites. This chain is Small ribosomal subunit protein uS13, found in Shewanella frigidimarina (strain NCIMB 400).